A 137-amino-acid polypeptide reads, in one-letter code: Nucleoside diphosphate kinase (137 aa).

ATP is bound by residues K9, F57, R85, T91, R102, and N112. H115 functions as the Pros-phosphohistidine intermediate in the catalytic mechanism.

It belongs to the NDK family. Homotetramer. Mg(2+) serves as cofactor.

It is found in the cytoplasm. It catalyses the reaction a 2'-deoxyribonucleoside 5'-diphosphate + ATP = a 2'-deoxyribonucleoside 5'-triphosphate + ADP. It carries out the reaction a ribonucleoside 5'-diphosphate + ATP = a ribonucleoside 5'-triphosphate + ADP. Functionally, major role in the synthesis of nucleoside triphosphates other than ATP. The ATP gamma phosphate is transferred to the NDP beta phosphate via a ping-pong mechanism, using a phosphorylated active-site intermediate. The chain is Nucleoside diphosphate kinase from Desulfotalea psychrophila (strain LSv54 / DSM 12343).